The following is a 213-amino-acid chain: High frequency lysogenization protein HflD homolog (213 aa).

A coiled-coil region spans residues glutamine 79–glutamine 126.

The protein belongs to the HflD family.

The protein resides in the cytoplasm. It is found in the cell inner membrane. This is High frequency lysogenization protein HflD homolog from Shigella boydii serotype 18 (strain CDC 3083-94 / BS512).